A 207-amino-acid chain; its full sequence is Large ribosomal subunit protein uL4 (207 aa).

Positions 47 to 78 are disordered; the sequence is GTHKVKNRSEVRGGGRKPWRQKGTGRARQGSI. Residues 60 to 71 show a composition bias toward basic residues; sequence GGRKPWRQKGTG.

This sequence belongs to the universal ribosomal protein uL4 family. In terms of assembly, part of the 50S ribosomal subunit.

One of the primary rRNA binding proteins, this protein initially binds near the 5'-end of the 23S rRNA. It is important during the early stages of 50S assembly. It makes multiple contacts with different domains of the 23S rRNA in the assembled 50S subunit and ribosome. Functionally, forms part of the polypeptide exit tunnel. In Listeria innocua serovar 6a (strain ATCC BAA-680 / CLIP 11262), this protein is Large ribosomal subunit protein uL4.